Here is a 673-residue protein sequence, read N- to C-terminus: Annexin A6 (673 aa).

The residue at position 2 (Ala2) is an N-acetylalanine. Ser13 is modified (phosphoserine). 8 Annexin repeats span residues 20–91, 92–163, 175–247, 251–322, 363–434, 435–506, 521–595, and 599–670; these read FDAN…NLMR, PLAY…VLLQ, DLVQ…AVVK, STPE…KLCG, FNPD…GLMM, PPAH…SLAT, EDAQ…AIVQ, and NKPL…ALCG. Phosphotyrosine is present on Tyr30. Residues Lys63, Lys68, Lys75, and Lys81 each carry the N6-acetyllysine modification. Position 201 is a phosphotyrosine (Tyr201). Lys306, Lys370, and Lys418 each carry N6-acetyllysine. Phosphoserine is present on Ser422. Lys483 is subject to N6-acetyllysine. Ser537 carries the phosphoserine modification. N6-acetyllysine is present on Lys620.

This sequence belongs to the annexin family.

It localises to the cytoplasm. Its subcellular location is the melanosome. In terms of biological role, may associate with CD21. May regulate the release of Ca(2+) from intracellular stores. In Mus musculus (Mouse), this protein is Annexin A6 (Anxa6).